Reading from the N-terminus, the 159-residue chain is 2-C-methyl-D-erythritol 2,4-cyclodiphosphate synthase (159 aa).

The a divalent metal cation site is built by aspartate 10 and histidine 12. 4-CDP-2-C-methyl-D-erythritol 2-phosphate contacts are provided by residues aspartate 10–histidine 12 and histidine 36–serine 37. An a divalent metal cation-binding site is contributed by histidine 44. 4-CDP-2-C-methyl-D-erythritol 2-phosphate is bound by residues aspartate 58–glycine 60, threonine 134–glutamate 137, phenylalanine 141, and arginine 144.

It belongs to the IspF family. Homotrimer. The cofactor is a divalent metal cation.

It catalyses the reaction 4-CDP-2-C-methyl-D-erythritol 2-phosphate = 2-C-methyl-D-erythritol 2,4-cyclic diphosphate + CMP. Its pathway is isoprenoid biosynthesis; isopentenyl diphosphate biosynthesis via DXP pathway; isopentenyl diphosphate from 1-deoxy-D-xylulose 5-phosphate: step 4/6. Functionally, involved in the biosynthesis of isopentenyl diphosphate (IPP) and dimethylallyl diphosphate (DMAPP), two major building blocks of isoprenoid compounds. Catalyzes the conversion of 4-diphosphocytidyl-2-C-methyl-D-erythritol 2-phosphate (CDP-ME2P) to 2-C-methyl-D-erythritol 2,4-cyclodiphosphate (ME-CPP) with a corresponding release of cytidine 5-monophosphate (CMP). This is 2-C-methyl-D-erythritol 2,4-cyclodiphosphate synthase from Bacteroides thetaiotaomicron (strain ATCC 29148 / DSM 2079 / JCM 5827 / CCUG 10774 / NCTC 10582 / VPI-5482 / E50).